Here is a 546-residue protein sequence, read N- to C-terminus: Probable Dol-P-Man:Man(7)GlcNAc(2)-PP-Dol alpha-1,6-mannosyltransferase (546 aa).

The next 9 membrane-spanning stretches (helical) occupy residues 5–25 (ESICWYLANILLVTCIGYYSY), 67–87 (FIPSLFIAVLSYIPSWFVNPL), 113–133 (FGTLSGALFILFSCAQFHLVY), 166–186 (ILVFAAAIVRSEIALLLMCLI), 200–220 (LLLVGISSSLAAVGASFLIDS), 258–278 (LPWLFLNPTTLLFLLISFVYI), 283–303 (LLIYVPLFFIFVYSFLGHKEW), 305–325 (FIIYSIPWFNAASAIGASLCF), and 340–360 (LMFFSGIIFGFIGSSFLLYVF).

It belongs to the glycosyltransferase 22 family.

Its subcellular location is the endoplasmic reticulum membrane. The enzyme catalyses an alpha-D-Man-(1-&gt;2)-alpha-D-Man-(1-&gt;2)-alpha-D-Man-(1-&gt;3)-[alpha-D-Man-(1-&gt;2)-alpha-D-Man-(1-&gt;3)-alpha-D-Man-(1-&gt;6)]-beta-D-Man-(1-&gt;4)-beta-D-GlcNAc-(1-&gt;4)-alpha-D-GlcNAc-diphospho-di-trans,poly-cis-dolichol + a di-trans,poly-cis-dolichyl beta-D-mannosyl phosphate = an alpha-D-Man-(1-&gt;2)-alpha-D-Man-(1-&gt;2)-alpha-D-Man-(1-&gt;3)-[alpha-D-Man-(1-&gt;2)-alpha-D-Man-(1-&gt;3)-[alpha-D-Man-(1-&gt;6)]-alpha-D-Man-(1-&gt;6)]-beta-D-Man-(1-&gt;4)-beta-D-GlcNAc-(1-&gt;4)-alpha-D-GlcNAc-diphospho-di-trans,poly-cis-dolichol + a di-trans,poly-cis-dolichyl phosphate + H(+). The protein operates within protein modification; protein glycosylation. Mannosyltransferase that operates in the biosynthetic pathway of dolichol-linked oligosaccharides, the glycan precursors employed in protein asparagine (N)-glycosylation. The assembly of dolichol-linked oligosaccharides begins on the cytosolic side of the endoplasmic reticulum membrane and finishes in its lumen. The sequential addition of sugars to dolichol pyrophosphate produces dolichol-linked oligosaccharides containing fourteen sugars, including two GlcNAcs, nine mannoses and three glucoses. Once assembled, the oligosaccharide is transferred from the lipid to nascent proteins by oligosaccharyltransferases. In the lumen of the endoplasmic reticulum, adds the eighth mannose residue in an alpha-1,6 linkage onto Man(7)GlcNAc(2)-PP-dolichol to produce Man(8)GlcNAc(2)-PP-dolichol. This is Probable Dol-P-Man:Man(7)GlcNAc(2)-PP-Dol alpha-1,6-mannosyltransferase (alg12) from Schizosaccharomyces pombe (strain 972 / ATCC 24843) (Fission yeast).